The primary structure comprises 256 residues: Protein CC2D2B homolog (256 aa).

The segment at 1-24 is disordered; that stretch reads MSEEMDNVTAEEITDKHLQKDLDA. A compositionally biased stretch (basic and acidic residues) spans 13 to 22; sequence ITDKHLQKDL. 2 coiled-coil regions span residues 136–159 and 194–214; these read DLLK…KANI and EIYK…EEGK.

This chain is Protein CC2D2B homolog, found in Macaca fascicularis (Crab-eating macaque).